The sequence spans 870 residues: DNA mismatch repair protein MutS (870 aa).

Residue 622 to 629 (GPNMGGKS) coordinates ATP.

The protein belongs to the DNA mismatch repair MutS family.

This protein is involved in the repair of mismatches in DNA. It is possible that it carries out the mismatch recognition step. This protein has a weak ATPase activity. The protein is DNA mismatch repair protein MutS of Methylibium petroleiphilum (strain ATCC BAA-1232 / LMG 22953 / PM1).